A 480-amino-acid polypeptide reads, in one-letter code: Endoplasmic reticulum lectin 1 (480 aa).

The N-terminal stretch at 1-27 is a signal peptide; it reads MRRSDRFPCAGASLLVVLCGVFPSSFG. 2 consecutive MRH domains span residues 108–245 and 339–466; these read SSCS…LCNH and SYCF…ICKI. Cysteine 110 and cysteine 123 form a disulfide bridge. The tract at residues 152 to 172 is disordered; sequence VKKSPSEAGENQEDKERTEGH. Basic and acidic residues predominate over residues 163–172; sequence QEDKERTEGH. 5 cysteine pairs are disulfide-bonded: cysteine 198-cysteine 231, cysteine 214-cysteine 243, cysteine 341-cysteine 354, cysteine 418-cysteine 452, and cysteine 433-cysteine 464.

Its subcellular location is the endoplasmic reticulum lumen. Its function is as follows. Probable lectin that binds selectively to improperly folded lumenal proteins. May function in endoplasmic reticulum quality control and endoplasmic reticulum-associated degradation (ERAD) of both non-glycosylated proteins and glycoproteins. The protein is Endoplasmic reticulum lectin 1 (erlec1) of Xenopus laevis (African clawed frog).